The sequence spans 539 residues: uncharacterized protein (539 aa).

Residues 34–63 form a disordered region; sequence AASEVSPIPQERPTTSLRKPTPRVQRPATD. Helical transmembrane passes span 103–123, 141–161, 184–204, 244–264, 277–299, 325–345, 360–380, 399–419, 434–454, 470–490, and 496–516; these read FATP…TTVF, MTAT…LDTV, ILLL…GILL, GIFH…IFLN, FLGA…IIYI, LAVP…LVTF, VLST…AAAA, THVS…ILFL, VVAL…ADNT, IGGV…AIIL, and WGLY…AGVE.

Belongs to the multi antimicrobial extrusion (MATE) (TC 2.A.66.1) family.

The protein resides in the vacuole membrane. This is an uncharacterized protein from Schizosaccharomyces pombe (strain 972 / ATCC 24843) (Fission yeast).